The chain runs to 470 residues: Neuraminidase (470 aa).

Topologically, residues 1–6 (MNPNQK) are intravirion. A helical transmembrane segment spans residues 7-27 (IITIGSISIAIGIISLMLQIG). Residues 11 to 33 (GSISIAIGIISLMLQIGNIISIW) are involved in apical transport and lipid raft association. At 28–470 (NIISIWASHS…GAELPFTIDK (443 aa)) the chain is on the virion surface side. The interval 36-90 (HSIQTGSQNHTGICNQRIITYENSTWVNHTYVNINNTNVVAGKDKTSVTLAGNSS) is hypervariable stalk region. Residues Asn-44, Asn-58, Asn-63, Asn-70, and Asn-88 are each glycosylated (N-linked (GlcNAc...) asparagine; by host). Residues 91 to 470 (LCSISGWAIY…GAELPFTIDK (380 aa)) are head of neuraminidase. 8 disulfides stabilise this stretch: Cys-92–Cys-417, Cys-124–Cys-129, Cys-184–Cys-231, Cys-233–Cys-238, Cys-279–Cys-292, Cys-281–Cys-290, Cys-318–Cys-335, and Cys-421–Cys-447. Arg-118 is a binding site for substrate. N-linked (GlcNAc...) asparagine; by host glycosylation occurs at Asn-146. The Proton donor/acceptor role is filled by Asp-151. A substrate-binding site is contributed by Arg-152. Asn-235 carries an N-linked (GlcNAc...) asparagine; by host glycan. Position 277–278 (277–278 (EE)) interacts with substrate. Arg-293 provides a ligand contact to substrate. Ca(2+)-binding residues include Asp-294, Gly-298, and Asp-324. Residue Arg-368 coordinates substrate. Tyr-402 (nucleophile) is an active-site residue. Residues Asn-434 and Asn-455 are each glycosylated (N-linked (GlcNAc...) asparagine; by host).

This sequence belongs to the glycosyl hydrolase 34 family. Homotetramer. It depends on Ca(2+) as a cofactor. Post-translationally, N-glycosylated.

It localises to the virion membrane. The protein localises to the host apical cell membrane. The enzyme catalyses Hydrolysis of alpha-(2-&gt;3)-, alpha-(2-&gt;6)-, alpha-(2-&gt;8)- glycosidic linkages of terminal sialic acid residues in oligosaccharides, glycoproteins, glycolipids, colominic acid and synthetic substrates.. Inhibited by the neuraminidase inhibitors zanamivir (Relenza) and oseltamivir (Tamiflu). These drugs interfere with the release of progeny virus from infected cells and are effective against all influenza strains. Resistance to neuraminidase inhibitors is quite rare. Catalyzes the removal of terminal sialic acid residues from viral and cellular glycoconjugates. Cleaves off the terminal sialic acids on the glycosylated HA during virus budding to facilitate virus release. Additionally helps virus spread through the circulation by further removing sialic acids from the cell surface. These cleavages prevent self-aggregation and ensure the efficient spread of the progeny virus from cell to cell. Otherwise, infection would be limited to one round of replication. Described as a receptor-destroying enzyme because it cleaves a terminal sialic acid from the cellular receptors. May facilitate viral invasion of the upper airways by cleaving the sialic acid moieties on the mucin of the airway epithelial cells. Likely to plays a role in the budding process through its association with lipid rafts during intracellular transport. May additionally display a raft-association independent effect on budding. Plays a role in the determination of host range restriction on replication and virulence. Sialidase activity in late endosome/lysosome traffic seems to enhance virus replication. The protein is Neuraminidase of Aves (Human).